The chain runs to 188 residues: MSTAESREGAQPGLHAYLRRGGVIAYPTESCYGLGCDPRNAAALRRLIRLKGRDAGKGMLLIADRYRRLQPFVGALSPTGRARMRRSWPGPVTWVVPASRRCPPELTGGRTTVAVRVTAHRPAAALCRSLGTALVSTSANKSGHTPAKTAAQCRRMFGARVRVVDGRIGTRRRPSTLIDLATGKILRA.

A YrdC-like domain is found at 8-188; it reads EGAQPGLHAY…DLATGKILRA (181 aa).

The protein belongs to the SUA5 family. TsaC subfamily.

It is found in the cytoplasm. The catalysed reaction is L-threonine + hydrogencarbonate + ATP = L-threonylcarbamoyladenylate + diphosphate + H2O. Functionally, required for the formation of a threonylcarbamoyl group on adenosine at position 37 (t(6)A37) in tRNAs that read codons beginning with adenine. Catalyzes the conversion of L-threonine, HCO(3)(-)/CO(2) and ATP to give threonylcarbamoyl-AMP (TC-AMP) as the acyladenylate intermediate, with the release of diphosphate. The chain is Threonylcarbamoyl-AMP synthase from Thiobacillus denitrificans (strain ATCC 25259 / T1).